The primary structure comprises 221 residues: N-(5'-phosphoribosyl)anthranilate isomerase (221 aa).

This sequence belongs to the TrpF family.

It carries out the reaction N-(5-phospho-beta-D-ribosyl)anthranilate = 1-(2-carboxyphenylamino)-1-deoxy-D-ribulose 5-phosphate. Its pathway is amino-acid biosynthesis; L-tryptophan biosynthesis; L-tryptophan from chorismate: step 3/5. The chain is N-(5'-phosphoribosyl)anthranilate isomerase from Chlorobaculum tepidum (strain ATCC 49652 / DSM 12025 / NBRC 103806 / TLS) (Chlorobium tepidum).